The following is a 426-amino-acid chain: Serine--tRNA ligase (426 aa).

233-235 serves as a coordination point for L-serine; sequence TSE. An ATP-binding site is contributed by 264–266; sequence RAE. An L-serine-binding site is contributed by Glu287. 351-354 contributes to the ATP binding site; that stretch reads EISS. Ser387 contacts L-serine.

It belongs to the class-II aminoacyl-tRNA synthetase family. Type-1 seryl-tRNA synthetase subfamily. Homodimer. The tRNA molecule binds across the dimer.

Its subcellular location is the cytoplasm. The catalysed reaction is tRNA(Ser) + L-serine + ATP = L-seryl-tRNA(Ser) + AMP + diphosphate + H(+). It catalyses the reaction tRNA(Sec) + L-serine + ATP = L-seryl-tRNA(Sec) + AMP + diphosphate + H(+). Its pathway is aminoacyl-tRNA biosynthesis; selenocysteinyl-tRNA(Sec) biosynthesis; L-seryl-tRNA(Sec) from L-serine and tRNA(Sec): step 1/1. Catalyzes the attachment of serine to tRNA(Ser). Is also able to aminoacylate tRNA(Sec) with serine, to form the misacylated tRNA L-seryl-tRNA(Sec), which will be further converted into selenocysteinyl-tRNA(Sec). This chain is Serine--tRNA ligase, found in Stenotrophomonas maltophilia (strain K279a).